Here is a 414-residue protein sequence, read N- to C-terminus: Multifunctional CCA protein (414 aa).

Gly8 and Arg11 together coordinate ATP. Gly8 and Arg11 together coordinate CTP. Glu21 and Asp23 together coordinate Mg(2+). Arg91, Arg137, and Arg140 together coordinate ATP. Residues Arg91, Arg137, and Arg140 each coordinate CTP. The HD domain maps to 228 to 329 (TGIHTMMTVA…LKLFDAIDVW (102 aa)).

The protein belongs to the tRNA nucleotidyltransferase/poly(A) polymerase family. Bacterial CCA-adding enzyme type 1 subfamily. Monomer. Can also form homodimers and oligomers. Mg(2+) serves as cofactor. The cofactor is Ni(2+).

The catalysed reaction is a tRNA precursor + 2 CTP + ATP = a tRNA with a 3' CCA end + 3 diphosphate. It catalyses the reaction a tRNA with a 3' CCA end + 2 CTP + ATP = a tRNA with a 3' CCACCA end + 3 diphosphate. Its function is as follows. Catalyzes the addition and repair of the essential 3'-terminal CCA sequence in tRNAs without using a nucleic acid template. Adds these three nucleotides in the order of C, C, and A to the tRNA nucleotide-73, using CTP and ATP as substrates and producing inorganic pyrophosphate. tRNA 3'-terminal CCA addition is required both for tRNA processing and repair. Also involved in tRNA surveillance by mediating tandem CCA addition to generate a CCACCA at the 3' terminus of unstable tRNAs. While stable tRNAs receive only 3'-terminal CCA, unstable tRNAs are marked with CCACCA and rapidly degraded. The protein is Multifunctional CCA protein of Pectobacterium atrosepticum (strain SCRI 1043 / ATCC BAA-672) (Erwinia carotovora subsp. atroseptica).